Consider the following 29-residue polypeptide: Dermaseptin-H7 (29 aa).

Residue Leu29 is modified to Leucine amide.

It belongs to the frog skin active peptide (FSAP) family. Dermaseptin subfamily. In terms of tissue distribution, expressed by the skin glands.

Its subcellular location is the secreted. Has antibacterial activity against the Gram-negative bacterium E.coli and the Gram-positive bacterium S.aureus. Has antiprotozoal activity against L.amazonensis. Has antifungal activity. Has no hemolytic activity. In Pithecopus hypochondrialis (Orange-legged leaf frog), this protein is Dermaseptin-H7.